Reading from the N-terminus, the 363-residue chain is Dihydroorotate dehydrogenase (quinone) (363 aa).

FMN contacts are provided by residues 67 to 71 (AGYDK) and Thr-91. Residue Lys-71 coordinates substrate. 116 to 120 (NRMGF) is a binding site for substrate. FMN contacts are provided by Asn-145 and Asn-178. Asn-178 contacts substrate. Ser-181 functions as the Nucleophile in the catalytic mechanism. Substrate is bound at residue Asn-183. Lys-224 and Thr-254 together coordinate FMN. Residue 255-256 (NT) coordinates substrate. FMN is bound by residues Gly-275, Gly-304, and 325-326 (YS).

The protein belongs to the dihydroorotate dehydrogenase family. Type 2 subfamily. Monomer. Requires FMN as cofactor.

The protein localises to the cell membrane. It carries out the reaction (S)-dihydroorotate + a quinone = orotate + a quinol. It participates in pyrimidine metabolism; UMP biosynthesis via de novo pathway; orotate from (S)-dihydroorotate (quinone route): step 1/1. Its function is as follows. Catalyzes the conversion of dihydroorotate to orotate with quinone as electron acceptor. This Acidithiobacillus ferrooxidans (strain ATCC 23270 / DSM 14882 / CIP 104768 / NCIMB 8455) (Ferrobacillus ferrooxidans (strain ATCC 23270)) protein is Dihydroorotate dehydrogenase (quinone).